A 230-amino-acid chain; its full sequence is Flagellar L-ring protein (230 aa).

The N-terminal stretch at 1–15 (MSRLPSLSSLCLAIA) is a signal peptide. Residue C16 is the site of N-palmitoyl cysteine attachment. A lipid anchor (S-diacylglycerol cysteine) is attached at C16.

It belongs to the FlgH family. The basal body constitutes a major portion of the flagellar organelle and consists of four rings (L,P,S, and M) mounted on a central rod.

It is found in the cell outer membrane. The protein resides in the bacterial flagellum basal body. Assembles around the rod to form the L-ring and probably protects the motor/basal body from shearing forces during rotation. In Xanthomonas campestris pv. campestris (strain 8004), this protein is Flagellar L-ring protein.